The chain runs to 443 residues: Squalene synthase (443 aa).

Helical transmembrane passes span 291-311 (TSFN…ELVF) and 423-443 (ILLL…VRII).

Belongs to the phytoene/squalene synthase family. Mg(2+) is required as a cofactor.

The protein localises to the endoplasmic reticulum membrane. It catalyses the reaction 2 (2E,6E)-farnesyl diphosphate + NADPH + H(+) = squalene + 2 diphosphate + NADP(+). It carries out the reaction 2 (2E,6E)-farnesyl diphosphate + NADH + H(+) = squalene + 2 diphosphate + NAD(+). It functions in the pathway terpene metabolism; lanosterol biosynthesis; lanosterol from farnesyl diphosphate: step 1/3. Functionally, catalyzes the condensation of 2 two farnesyl pyrophosphate moieties to form squalene. It is the first committed enzyme of the sterol biosynthesis pathway. Required for the biosynthesis of ergosterol. The sequence is that of Squalene synthase (ERG9) from Cyberlindnera jadinii (Torula yeast).